The primary structure comprises 376 residues: Erythronate-4-phosphate dehydrogenase (376 aa).

Ser-45 and Thr-67 together coordinate substrate. Asp-147 serves as a coordination point for NAD(+). The active site involves Arg-209. An NAD(+)-binding site is contributed by Asp-233. Glu-238 is an active-site residue. The active-site Proton donor is His-255. Residue Gly-258 coordinates NAD(+). Residue Tyr-259 coordinates substrate.

The protein belongs to the D-isomer specific 2-hydroxyacid dehydrogenase family. PdxB subfamily. In terms of assembly, homodimer.

It is found in the cytoplasm. The catalysed reaction is 4-phospho-D-erythronate + NAD(+) = (R)-3-hydroxy-2-oxo-4-phosphooxybutanoate + NADH + H(+). It participates in cofactor biosynthesis; pyridoxine 5'-phosphate biosynthesis; pyridoxine 5'-phosphate from D-erythrose 4-phosphate: step 2/5. In terms of biological role, catalyzes the oxidation of erythronate-4-phosphate to 3-hydroxy-2-oxo-4-phosphonooxybutanoate. This Shewanella baltica (strain OS195) protein is Erythronate-4-phosphate dehydrogenase.